A 74-amino-acid chain; its full sequence is Exodeoxyribonuclease 7 small subunit (74 aa).

This sequence belongs to the XseB family. In terms of assembly, heterooligomer composed of large and small subunits.

The protein resides in the cytoplasm. The enzyme catalyses Exonucleolytic cleavage in either 5'- to 3'- or 3'- to 5'-direction to yield nucleoside 5'-phosphates.. In terms of biological role, bidirectionally degrades single-stranded DNA into large acid-insoluble oligonucleotides, which are then degraded further into small acid-soluble oligonucleotides. In Haemophilus ducreyi (strain 35000HP / ATCC 700724), this protein is Exodeoxyribonuclease 7 small subunit.